The chain runs to 430 residues: Adenylosuccinate synthetase (430 aa).

Residues 12–18 and 40–42 each bind GTP; these read GDEGKGK and GHT. The Proton acceptor role is filled by Asp-13. Asp-13 and Gly-40 together coordinate Mg(2+). Residues 13–16, 38–41, Thr-129, Arg-143, Gln-223, Thr-238, and Arg-302 each bind IMP; these read DEGK and NAGH. His-41 serves as the catalytic Proton donor. Position 298–304 (298–304) interacts with substrate; sequence TTTGRPR. GTP is bound by residues Arg-304, 330 to 332, and 412 to 414; these read KLD and SVG.

It belongs to the adenylosuccinate synthetase family. In terms of assembly, homodimer. The cofactor is Mg(2+).

It is found in the cytoplasm. The enzyme catalyses IMP + L-aspartate + GTP = N(6)-(1,2-dicarboxyethyl)-AMP + GDP + phosphate + 2 H(+). It functions in the pathway purine metabolism; AMP biosynthesis via de novo pathway; AMP from IMP: step 1/2. Its function is as follows. Plays an important role in the de novo pathway of purine nucleotide biosynthesis. Catalyzes the first committed step in the biosynthesis of AMP from IMP. The chain is Adenylosuccinate synthetase from Desulforudis audaxviator (strain MP104C).